A 104-amino-acid chain; its full sequence is L-rhamnose mutarotase (104 aa).

Tyr-18 contributes to the substrate binding site. His-22 serves as the catalytic Proton donor. Residues Tyr-41 and 76-77 (WW) contribute to the substrate site.

Belongs to the rhamnose mutarotase family. In terms of assembly, homodimer.

It is found in the cytoplasm. The enzyme catalyses alpha-L-rhamnose = beta-L-rhamnose. It functions in the pathway carbohydrate metabolism; L-rhamnose metabolism. Its function is as follows. Involved in the anomeric conversion of L-rhamnose. The protein is L-rhamnose mutarotase of Listeria monocytogenes serotype 4b (strain F2365).